Consider the following 388-residue polypeptide: 2-Hydroxyacid oxidase (388 aa).

Residues 1–21 (MENQFKNNNNSSSIETSNQFS) form a disordered region. Residues 26 to 384 (NRLDSFVSVS…NNSIIWDQNK (359 aa)) enclose the FMN hydroxy acid dehydrogenase domain. Position 52 (Y52) interacts with glyoxylate. Residues 105–107 (PWA), S134, 156–158 (QLY), and T184 contribute to the FMN site. Position 158 (Y158) interacts with glyoxylate. R193 provides a ligand contact to glyoxylate. FMN is bound by residues K255 and S277. Glyoxylate contacts are provided by H279 and R282. H279 (proton acceptor) is an active-site residue. FMN contacts are provided by residues 310–314 (DGGIR) and 333–334 (GR).

This sequence belongs to the FMN-dependent alpha-hydroxy acid dehydrogenase family. As to quaternary structure, homotetramer. It depends on FMN as a cofactor.

The enzyme catalyses glycolate + O2 = glyoxylate + H2O2. It catalyses the reaction a (2S)-2-hydroxycarboxylate + O2 = a 2-oxocarboxylate + H2O2. Its function is as follows. Catalyzes the oxidation of glycolate to glyoxylate, with a reduction of O2 to H2O2. May use other 2-hydroxyacids as substrates. The sequence is that of 2-Hydroxyacid oxidase (haox) from Dictyostelium discoideum (Social amoeba).